The following is a 153-amino-acid chain: FAD synthase (153 aa).

Residues 9–10 (TF), 14–17 (HPGH), and Asp92 each bind ATP.

The protein belongs to the archaeal FAD synthase family. Homodimer. It depends on a divalent metal cation as a cofactor.

The enzyme catalyses FMN + ATP + H(+) = FAD + diphosphate. The protein operates within cofactor biosynthesis; FAD biosynthesis; FAD from FMN: step 1/1. Functionally, catalyzes the transfer of the AMP portion of ATP to flavin mononucleotide (FMN) to produce flavin adenine dinucleotide (FAD) coenzyme. The sequence is that of FAD synthase from Halorubrum lacusprofundi (strain ATCC 49239 / DSM 5036 / JCM 8891 / ACAM 34).